A 621-amino-acid polypeptide reads, in one-letter code: Chaperone protein HscA homolog (621 aa).

This sequence belongs to the heat shock protein 70 family.

In terms of biological role, chaperone involved in the maturation of iron-sulfur cluster-containing proteins. Has a low intrinsic ATPase activity which is markedly stimulated by HscB. In Cupriavidus pinatubonensis (strain JMP 134 / LMG 1197) (Cupriavidus necator (strain JMP 134)), this protein is Chaperone protein HscA homolog.